We begin with the raw amino-acid sequence, 204 residues long: ATP phosphoribosyltransferase (204 aa).

Belongs to the ATP phosphoribosyltransferase family. Short subfamily. As to quaternary structure, heteromultimer composed of HisG and HisZ subunits.

The protein resides in the cytoplasm. It carries out the reaction 1-(5-phospho-beta-D-ribosyl)-ATP + diphosphate = 5-phospho-alpha-D-ribose 1-diphosphate + ATP. It functions in the pathway amino-acid biosynthesis; L-histidine biosynthesis; L-histidine from 5-phospho-alpha-D-ribose 1-diphosphate: step 1/9. In terms of biological role, catalyzes the condensation of ATP and 5-phosphoribose 1-diphosphate to form N'-(5'-phosphoribosyl)-ATP (PR-ATP). Has a crucial role in the pathway because the rate of histidine biosynthesis seems to be controlled primarily by regulation of HisG enzymatic activity. The polypeptide is ATP phosphoribosyltransferase (Staphylococcus aureus (strain Mu3 / ATCC 700698)).